The sequence spans 300 residues: Quinolinate synthase (300 aa).

Positions 23 and 40 each coordinate iminosuccinate. [4Fe-4S] cluster is bound at residue Cys-85. Residues 111 to 113 (YIN) and Ser-128 contribute to the iminosuccinate site. Residue Cys-171 participates in [4Fe-4S] cluster binding. Iminosuccinate-binding positions include 198–200 (HPE) and Thr-215. Cys-258 serves as a coordination point for [4Fe-4S] cluster.

The protein belongs to the quinolinate synthase family. Type 2 subfamily. The cofactor is [4Fe-4S] cluster.

The protein resides in the cytoplasm. The catalysed reaction is iminosuccinate + dihydroxyacetone phosphate = quinolinate + phosphate + 2 H2O + H(+). It functions in the pathway cofactor biosynthesis; NAD(+) biosynthesis; quinolinate from iminoaspartate: step 1/1. Functionally, catalyzes the condensation of iminoaspartate with dihydroxyacetone phosphate to form quinolinate. In Clostridium novyi (strain NT), this protein is Quinolinate synthase.